Reading from the N-terminus, the 350-residue chain is Kelch domain-containing protein 9 (350 aa).

Kelch repeat units follow at residues 39–89 (RFYL…LVGG), 91–137 (WLCV…SHTC), and 325–350 (QLYL…EFFI).

As to quaternary structure, interacts with CCNA1.

This chain is Kelch domain-containing protein 9 (Klhdc9), found in Mus musculus (Mouse).